The following is a 260-amino-acid chain: 3'-5' ssDNA/RNA exonuclease TatD (260 aa).

E92, H128, and H153 together coordinate a divalent metal cation.

Belongs to the metallo-dependent hydrolases superfamily. TatD-type hydrolase family. TatD subfamily. Monomer. The cofactor is Mg(2+).

The protein resides in the cytoplasm. Its function is as follows. 3'-5' exonuclease that prefers single-stranded DNA and RNA. May play a role in the H(2)O(2)-induced DNA damage repair. In Pectobacterium carotovorum subsp. carotovorum (strain PC1), this protein is 3'-5' ssDNA/RNA exonuclease TatD.